The chain runs to 256 residues: Probable ATP-dependent transporter slr0075 (256 aa).

An ABC transporter domain is found at 6-250; it reads LSIKNLTASV…EEKGYDFLDE (245 aa). Position 38–45 (38–45) interacts with ATP; sequence GRNGSGKS.

This sequence belongs to the ABC transporter superfamily. Ycf16 family.

In Synechocystis sp. (strain ATCC 27184 / PCC 6803 / Kazusa), this protein is Probable ATP-dependent transporter slr0075.